The primary structure comprises 347 residues: MDLAANEISIYDKLSETVDLVRQTGHQCGMSEKAIEKFIRQLLEKNEPQRPPPQYPLLIVVYKVLATLGLILLTAYFVIQPFSPLAPEPVLSGAHTWRSLIHHIRLMSLPIAKKYMSENKGVPLHVGDEDRPFPDFDPWWTNDCEQNESEPIPANCTGCAQKHLKVMLLEDAPRKFERLHPLVIKTGKPLLSEEIQHFLCQYPEATEGFSEGFFAKWWRCFPERWFPFPYPWRRPLNRSQILRELFPVFTHLPFPKDASLNKCFFLHPEPVVGSKMHKMPDLFIIGSGEAMLQLIPPFQCRRHCQSVAMPIEPGDIGYVDTTHWKVYIIARGVQPLVICDGTAFSEL.

Over 1 to 58 the chain is Cytoplasmic; sequence MDLAANEISIYDKLSETVDLVRQTGHQCGMSEKAIEKFIRQLLEKNEPQRPPPQYPLL. Residues 59–79 form a helical membrane-spanning segment; the sequence is IVVYKVLATLGLILLTAYFVI. Topologically, residues 80–347 are extracellular; that stretch reads QPFSPLAPEP…ICDGTAFSEL (268 aa).

Homodimer. Interacts with BRS3. Interacts (via N-terminus) with SIN3B. In terms of processing, glycosylated.

It localises to the golgi apparatus membrane. Its subcellular location is the cytoplasm. Exhibits histone deacetylase (HDAC) enhancer properties. May play a role in cell cycle progression and wound repair of bronchial epithelial cells. This Pongo abelii (Sumatran orangutan) protein is Bombesin receptor-activated protein C6orf89 homolog.